A 101-amino-acid polypeptide reads, in one-letter code: NAD(P)H-quinone oxidoreductase subunit 4L, chloroplastic (101 aa).

3 helical membrane-spanning segments follow: residues M2–I22, M32–F52, and I61–V81.

Belongs to the complex I subunit 4L family. NDH is composed of at least 16 different subunits, 5 of which are encoded in the nucleus.

The protein localises to the plastid. Its subcellular location is the chloroplast thylakoid membrane. It catalyses the reaction a plastoquinone + NADH + (n+1) H(+)(in) = a plastoquinol + NAD(+) + n H(+)(out). The enzyme catalyses a plastoquinone + NADPH + (n+1) H(+)(in) = a plastoquinol + NADP(+) + n H(+)(out). In terms of biological role, NDH shuttles electrons from NAD(P)H:plastoquinone, via FMN and iron-sulfur (Fe-S) centers, to quinones in the photosynthetic chain and possibly in a chloroplast respiratory chain. The immediate electron acceptor for the enzyme in this species is believed to be plastoquinone. Couples the redox reaction to proton translocation, and thus conserves the redox energy in a proton gradient. This chain is NAD(P)H-quinone oxidoreductase subunit 4L, chloroplastic, found in Calycanthus floridus var. glaucus (Eastern sweetshrub).